A 183-amino-acid polypeptide reads, in one-letter code: Large ribosomal subunit protein uL5 (183 aa).

Belongs to the universal ribosomal protein uL5 family. Part of the 50S ribosomal subunit; part of the 5S rRNA/L5/L18/L25 subcomplex. Contacts the 5S rRNA and the P site tRNA. Forms a bridge to the 30S subunit in the 70S ribosome.

In terms of biological role, this is one of the proteins that bind and probably mediate the attachment of the 5S RNA into the large ribosomal subunit, where it forms part of the central protuberance. In the 70S ribosome it contacts protein S13 of the 30S subunit (bridge B1b), connecting the 2 subunits; this bridge is implicated in subunit movement. Contacts the P site tRNA; the 5S rRNA and some of its associated proteins might help stabilize positioning of ribosome-bound tRNAs. This Leptospira biflexa serovar Patoc (strain Patoc 1 / Ames) protein is Large ribosomal subunit protein uL5.